A 496-amino-acid chain; its full sequence is Glycylpeptide N-tetradecanoyltransferase 1 (496 aa).

The segment at 1 to 82 is disordered; sequence MADESETAVK…SAQDQPVKMN (82 aa). 2 positions are modified to phosphoserine: Ser-31 and Ser-47. The span at 55–66 shows a compositional bias: basic residues; that stretch reads KKKKKKQKKKKE. At Ser-83 the chain carries Phosphoserine. Tetradecanoyl-CoA contacts are provided by Gln-118, Phe-119, Trp-120, Phe-247, Leu-248, Cys-249, Val-250, Ser-256, Arg-258, Val-259, and Ala-260.

The protein belongs to the NMT family. As to expression, heart, gut, kidney, liver and placenta.

It localises to the cytoplasm. It is found in the cytosol. The protein localises to the membrane. The catalysed reaction is N-terminal glycyl-[protein] + tetradecanoyl-CoA = N-tetradecanoylglycyl-[protein] + CoA + H(+). It carries out the reaction N-terminal glycyl-L-lysyl-[protein] + tetradecanoyl-CoA = N-terminal glycyl-(N(6)-tetradecanoyl)-L-lysyl-[protein] + CoA + H(+). Functionally, adds a myristoyl group to the N-terminal glycine residue of certain cellular and viral proteins. Also able to mediate N-terminal lysine myristoylation of proteins: catalyzes myristoylation of ARF6 on both 'Gly-2' and 'Lys-3'. Lysine myristoylation is required to maintain ARF6 on membranes during the GTPase cycle. This Homo sapiens (Human) protein is Glycylpeptide N-tetradecanoyltransferase 1.